The sequence spans 196 residues: ATP-dependent Clp protease proteolytic subunit (196 aa).

S98 functions as the Nucleophile in the catalytic mechanism. H123 is a catalytic residue.

The protein belongs to the peptidase S14 family. As to quaternary structure, fourteen ClpP subunits assemble into 2 heptameric rings which stack back to back to give a disk-like structure with a central cavity, resembling the structure of eukaryotic proteasomes.

The protein localises to the cytoplasm. It catalyses the reaction Hydrolysis of proteins to small peptides in the presence of ATP and magnesium. alpha-casein is the usual test substrate. In the absence of ATP, only oligopeptides shorter than five residues are hydrolyzed (such as succinyl-Leu-Tyr-|-NHMec, and Leu-Tyr-Leu-|-Tyr-Trp, in which cleavage of the -Tyr-|-Leu- and -Tyr-|-Trp bonds also occurs).. Its function is as follows. Cleaves peptides in various proteins in a process that requires ATP hydrolysis. Has a chymotrypsin-like activity. Plays a major role in the degradation of misfolded proteins. The protein is ATP-dependent Clp protease proteolytic subunit of Sulfurimonas denitrificans (strain ATCC 33889 / DSM 1251) (Thiomicrospira denitrificans (strain ATCC 33889 / DSM 1251)).